Here is a 108-residue protein sequence, read N- to C-terminus: Pyrimidine/purine nucleoside phosphorylase (108 aa).

Belongs to the nucleoside phosphorylase PpnP family.

It carries out the reaction a purine D-ribonucleoside + phosphate = a purine nucleobase + alpha-D-ribose 1-phosphate. It catalyses the reaction adenosine + phosphate = alpha-D-ribose 1-phosphate + adenine. The enzyme catalyses cytidine + phosphate = cytosine + alpha-D-ribose 1-phosphate. The catalysed reaction is guanosine + phosphate = alpha-D-ribose 1-phosphate + guanine. It carries out the reaction inosine + phosphate = alpha-D-ribose 1-phosphate + hypoxanthine. It catalyses the reaction thymidine + phosphate = 2-deoxy-alpha-D-ribose 1-phosphate + thymine. The enzyme catalyses uridine + phosphate = alpha-D-ribose 1-phosphate + uracil. The catalysed reaction is xanthosine + phosphate = alpha-D-ribose 1-phosphate + xanthine. Catalyzes the phosphorolysis of diverse nucleosides, yielding D-ribose 1-phosphate and the respective free bases. Can use uridine, adenosine, guanosine, cytidine, thymidine, inosine and xanthosine as substrates. Also catalyzes the reverse reactions. The polypeptide is Pyrimidine/purine nucleoside phosphorylase (Polaromonas sp. (strain JS666 / ATCC BAA-500)).